The sequence spans 693 residues: MKIFREVFELGNKEIILETGGMARQADGSVTVSCGNNIVLVTTVVKKSVADGTDFFPLSVHYLEKTYAAGKIPGGFLRREGRPSEEQILISRLIDRSIRPSFPDGFFNEIQIVATVLSYDGAFSPDILALIGASASLAISGAPYDDVVAGVRVGYTNGKYILNPNKQDLRDSDLDLVVSGTDDAILMVESEANSLPESVMLGGILYAHKHLKTIINSINRLAKVASKPRMEYSIYQINKFLKSQIKSQFFGEIKNAYTIASKQERNLKLNAIRKNVLEYIFSSDVDGNEYTEKEILEAFHDIEKDLVRSNILEGKPRIDGRCTETIRPINVKIGVLPGVHGSALFTRGETQALVVTTLGSDRDAQLVESLDGIEKCRYMLHYNFPPYSVGECGMVGMAPKRREIGHANLAKRATQAVFPNEEAYPYVVRVVSEILESNGSSSMATVCGSSLSMMDAGVPIAEPVAGIAMGLIKDGAKYAVLSDILGDEDHLGDMDFKVAGTRYGVTALQMDIKIKGISREILEQALEQARVGRLHILGIMNEVIKEHKEAVSDVAPQIHVMNINPAKIKDVVGRGGATVKGIVEKTGAQIDTSDSGEVKVFAKDKKSMDMAVAMIEEIVAEVEEGQVYKGKIVKLLDSGVFVNLLGSQDGYLPFSEIEQAGMKTNSLVEGQGLEVLVQNIDRGGRVKLSLVAR.

Positions 489 and 495 each coordinate Mg(2+). Positions 556-615 (PQIHVMNINPAKIKDVVGRGGATVKGIVEKTGAQIDTSDSGEVKVFAKDKKSMDMAVAMI) constitute a KH domain. An S1 motif domain is found at 625–693 (GQVYKGKIVK…GRVKLSLVAR (69 aa)).

Belongs to the polyribonucleotide nucleotidyltransferase family. Component of the RNA degradosome, which is a multiprotein complex involved in RNA processing and mRNA degradation. Mg(2+) serves as cofactor.

It is found in the cytoplasm. The catalysed reaction is RNA(n+1) + phosphate = RNA(n) + a ribonucleoside 5'-diphosphate. Functionally, involved in mRNA degradation. Catalyzes the phosphorolysis of single-stranded polyribonucleotides processively in the 3'- to 5'-direction. The sequence is that of Polyribonucleotide nucleotidyltransferase from Francisella tularensis subsp. mediasiatica (strain FSC147).